Here is a 481-residue protein sequence, read N- to C-terminus: Wax ester synthase/diacylglycerol acyltransferase 1 (481 aa).

The Cytoplasmic portion of the chain corresponds to 1 to 185; it reads MKAEKVMERE…TTATKKPADS (185 aa). Catalysis depends on H147, which acts as the Proton acceptor. The chain crosses the membrane as a helical span at residues 186 to 206; the sequence is MAWWLFVGFWFMIRVTFTTIV. The Lumenal portion of the chain corresponds to 207 to 481; the sequence is EFSKLMLTVC…QGEIFHKTEV (275 aa).

It in the N-terminal section; belongs to the long-chain O-acyltransferase family. As to expression, expressed in flowers, siliques, top parts of stems, and leaves. Not found in roots, seeds and young seedlings.

The protein localises to the cell membrane. It is found in the endoplasmic reticulum membrane. It carries out the reaction a long chain fatty alcohol + a fatty acyl-CoA = a wax ester + CoA. The catalysed reaction is an acyl-CoA + a 1,2-diacyl-sn-glycerol = a triacyl-sn-glycerol + CoA. The protein operates within glycerolipid metabolism; triacylglycerol biosynthesis. It participates in lipid metabolism. Bifunctional wax ester synthase/diacylglycerol acyltransferase. Involved in cuticular wax biosynthesis. Required to reduce leaf water loss, especially during drought. The protein is Wax ester synthase/diacylglycerol acyltransferase 1 of Arabidopsis thaliana (Mouse-ear cress).